Reading from the N-terminus, the 235-residue chain is MDTKLSVTGAKKSQGKASGLGNEGTPIGNEESTNKAKNGNKKRNKNRNRNKKTETKEQNEPKPVTGGEEVRVEKSQAKNRRRKNNNGANKKNTLHYSKEINVEERKQIAKRQEEIEQCIHTLSDFKLFKKGKHVTSYGYRISPMTDSGKISLKILFNIPLDYPKAPIKLTMKSNEEVSSYMDTVIANFNWKARQLVKEDWRILSQINYLVSELEILKMENYKQIDKLRNSFYKTI.

The interval 1-98 is disordered; that stretch reads MDTKLSVTGA…NKKNTLHYSK (98 aa). Residues lysine 16 and lysine 35 each participate in a glycyl lysine isopeptide (Lys-Gly) (interchain with G-Cter in ubiquitin) cross-link. Residues 38-50 are compositionally biased toward basic residues; sequence NGNKKRNKNRNRN. Residues 51–60 are compositionally biased toward basic and acidic residues; the sequence is KKTETKEQNE.

This is an uncharacterized protein from Saccharomyces cerevisiae (strain ATCC 204508 / S288c) (Baker's yeast).